Here is a 400-residue protein sequence, read N- to C-terminus: tRNA(Ile)-lysidine synthase (400 aa).

ATP is bound at residue 20-25 (SGGLDS).

This sequence belongs to the tRNA(Ile)-lysidine synthase family.

Its subcellular location is the cytoplasm. The enzyme catalyses cytidine(34) in tRNA(Ile2) + L-lysine + ATP = lysidine(34) in tRNA(Ile2) + AMP + diphosphate + H(+). Ligates lysine onto the cytidine present at position 34 of the AUA codon-specific tRNA(Ile) that contains the anticodon CAU, in an ATP-dependent manner. Cytidine is converted to lysidine, thus changing the amino acid specificity of the tRNA from methionine to isoleucine. The sequence is that of tRNA(Ile)-lysidine synthase from Wigglesworthia glossinidia brevipalpis.